Here is a 221-residue protein sequence, read N- to C-terminus: Imidazole glycerol phosphate synthase subunit HisH (221 aa).

A Glutamine amidotransferase type-1 domain is found at 9 to 221 (DVVIIDTGCA…QILGNFLKMQ (213 aa)). Cys84 acts as the Nucleophile in catalysis. Catalysis depends on residues His202 and Glu204.

As to quaternary structure, heterodimer of HisH and HisF.

The protein localises to the cytoplasm. It catalyses the reaction 5-[(5-phospho-1-deoxy-D-ribulos-1-ylimino)methylamino]-1-(5-phospho-beta-D-ribosyl)imidazole-4-carboxamide + L-glutamine = D-erythro-1-(imidazol-4-yl)glycerol 3-phosphate + 5-amino-1-(5-phospho-beta-D-ribosyl)imidazole-4-carboxamide + L-glutamate + H(+). The catalysed reaction is L-glutamine + H2O = L-glutamate + NH4(+). The protein operates within amino-acid biosynthesis; L-histidine biosynthesis; L-histidine from 5-phospho-alpha-D-ribose 1-diphosphate: step 5/9. Its function is as follows. IGPS catalyzes the conversion of PRFAR and glutamine to IGP, AICAR and glutamate. The HisH subunit catalyzes the hydrolysis of glutamine to glutamate and ammonia as part of the synthesis of IGP and AICAR. The resulting ammonia molecule is channeled to the active site of HisF. The sequence is that of Imidazole glycerol phosphate synthase subunit HisH from Shewanella oneidensis (strain ATCC 700550 / JCM 31522 / CIP 106686 / LMG 19005 / NCIMB 14063 / MR-1).